We begin with the raw amino-acid sequence, 129 residues long: Replication initiation control protein YabA (129 aa).

Positions 103, 105, 119, and 122 each coordinate Zn(2+).

It belongs to the YabA family. As to quaternary structure, homotetramer. Interacts with both DnaA and DnaN, acting as a bridge between these two proteins. The cofactor is Zn(2+).

The protein localises to the cytoplasm. Its subcellular location is the nucleoid. Functionally, involved in control of chromosome replication initiation. Inhibits the cooperative binding of DnaA to the oriC region, thus negatively regulating initiation of chromosome replication. Inhibits the ability of DnaA-ATP to form a helix on DNA; does not disassemble preformed DnaA-DNA helices. Decreases the residence time of DnaA on the chromosome at its binding sites (oriC, replication forks and promoter-binding sites). Tethers DnaA to the replication machinery via the DNA polymerase beta sliding clamp subunit (dnaN). Associates with oriC and other DnaA targets on the chromosome in a DnaA-dependent manner. This chain is Replication initiation control protein YabA, found in Listeria welshimeri serovar 6b (strain ATCC 35897 / DSM 20650 / CCUG 15529 / CIP 8149 / NCTC 11857 / SLCC 5334 / V8).